The sequence spans 396 residues: MCWPLLYPLVLGLSISLAEGIQTPSIYDDVESTRGSHEGPLGPTVELKEPKSSDKPNPRGYPGKFCANDSDTLELPASSQALLLGWVPTRLVPALYGLVVAVGLPANGLALWVLATRVPRLPSTILLMNLAVADLLLALVLPPRLAYHLRGQRWPFGEAACRVATAALYGHMYGSVLLLAAVSLDRYLALVHPLRARALRGQRLTTGLCLVAWLSAATLALPLTLHRQTFRLAGSDRMLCHDALPLTEQTSHWRPAFICLAVLGCFVPLLAMGLCYGATLRALAANGQRYSHALRLTALVLFSAVASFTPSNVLLVLHYSNPSPEAWGNLYGAYVPSLALSTLNSCVDPFIYYYVSHEFREKVRAMLCRQPEASSSSQASREAGSRGTAICSSTLL.

The signal sequence occupies residues 1–16; that stretch reads MCWPLLYPLVLGLSIS. The propeptide at 17–59 is removed for receptor activation; sequence LAEGIQTPSIYDDVESTRGSHEGPLGPTVELKEPKSSDKPNPR. The tract at residues 28-62 is disordered; the sequence is DDVESTRGSHEGPLGPTVELKEPKSSDKPNPRGYP. A compositionally biased stretch (basic and acidic residues) spans 46-57; the sequence is ELKEPKSSDKPN. The Extracellular portion of the chain corresponds to 60–94; it reads GYPGKFCANDSDTLELPASSQALLLGWVPTRLVPA. An N-linked (GlcNAc...) asparagine glycan is attached at N68. The chain crosses the membrane as a helical span at residues 95–115; it reads LYGLVVAVGLPANGLALWVLA. Residues 116-120 lie on the Cytoplasmic side of the membrane; sequence TRVPR. The chain crosses the membrane as a helical span at residues 121–141; sequence LPSTILLMNLAVADLLLALVL. Over 142 to 162 the chain is Extracellular; the sequence is PPRLAYHLRGQRWPFGEAACR. C161 and C240 are oxidised to a cystine. The chain crosses the membrane as a helical span at residues 163-183; sequence VATAALYGHMYGSVLLLAAVS. Residues 184-203 are Cytoplasmic-facing; sequence LDRYLALVHPLRARALRGQR. Residues 204-224 form a helical membrane-spanning segment; the sequence is LTTGLCLVAWLSAATLALPLT. Topologically, residues 225 to 255 are extracellular; sequence LHRQTFRLAGSDRMLCHDALPLTEQTSHWRP. Residues 256-276 traverse the membrane as a helical segment; that stretch reads AFICLAVLGCFVPLLAMGLCY. At 277-295 the chain is on the cytoplasmic side; it reads GATLRALAANGQRYSHALR. A helical membrane pass occupies residues 296-316; sequence LTALVLFSAVASFTPSNVLLV. The Extracellular portion of the chain corresponds to 317-331; the sequence is LHYSNPSPEAWGNLY. A helical transmembrane segment spans residues 332–355; it reads GAYVPSLALSTLNSCVDPFIYYYV. The Cytoplasmic portion of the chain corresponds to 356–396; sequence SHEFREKVRAMLCRQPEASSSSQASREAGSRGTAICSSTLL.

Belongs to the G-protein coupled receptor 1 family. A proteolytic cleavage generates a new N-terminus that functions as a tethered ligand. Highly expressed in the spleen. Slight expression in the heart, lung, skeletal muscle and kidney. No detectable expression in brain, liver or testis. Also detected in platelets.

The protein resides in the cell membrane. Functionally, receptor for activated thrombin or trypsin coupled to G proteins that stimulate phosphoinositide hydrolysis. May play a role in platelets activation. The protein is Proteinase-activated receptor 4 (F2rl3) of Mus musculus (Mouse).